Reading from the N-terminus, the 313-residue chain is Ribosomal RNA small subunit methyltransferase H (313 aa).

S-adenosyl-L-methionine-binding positions include glycine 33–histidine 35, aspartate 53, phenylalanine 80, aspartate 101, and glutamine 108. The disordered stretch occupies residues leucine 282 to alanine 313.

The protein belongs to the methyltransferase superfamily. RsmH family.

The protein localises to the cytoplasm. It catalyses the reaction cytidine(1402) in 16S rRNA + S-adenosyl-L-methionine = N(4)-methylcytidine(1402) in 16S rRNA + S-adenosyl-L-homocysteine + H(+). Specifically methylates the N4 position of cytidine in position 1402 (C1402) of 16S rRNA. This chain is Ribosomal RNA small subunit methyltransferase H, found in Magnetococcus marinus (strain ATCC BAA-1437 / JCM 17883 / MC-1).